A 68-amino-acid polypeptide reads, in one-letter code: MKLNEVKEFVKELRGLSQEELAKRENELKKELFELRFQAATGQLEQTARLKEVKKQIARIKTVQSEAK.

The protein belongs to the universal ribosomal protein uL29 family.

In Streptococcus pneumoniae (strain JJA), this protein is Large ribosomal subunit protein uL29.